The sequence spans 169 residues: Allophycocyanin subunit beta-18 (169 aa).

Asn72 is subject to N4-methylasparagine. A (2R,3E)-phycocyanobilin-binding site is contributed by Cys82.

It belongs to the phycobiliprotein family. As to quaternary structure, heterodimer of an alpha and a beta chain. In terms of processing, contains one covalently linked phycocyanobilin chromophore.

The protein resides in the plastid. The protein localises to the cyanelle thylakoid membrane. Light-harvesting photosynthetic bile pigment-protein from the phycobiliprotein complex. Allophycocyanin has a maximum absorption at approximately 650 nanometers. The polypeptide is Allophycocyanin subunit beta-18 (apcF) (Cyanophora paradoxa).